Consider the following 92-residue polypeptide: Beta-2-microglobulin (92 aa).

The Ig-like C1-type domain maps to 2–91 (PQIQVYTRHP…VSMKEPKTVN (90 aa)). A disulfide bond links Cys-22 and Cys-77.

The protein belongs to the beta-2-microglobulin family. Heterodimer of an alpha chain and a beta chain. Beta-2-microglobulin is the beta-chain of major histocompatibility complex class I molecules.

It localises to the secreted. Its function is as follows. Component of the class I major histocompatibility complex (MHC). Involved in the presentation of peptide antigens to the immune system. The sequence is that of Beta-2-microglobulin (B2m) from Mus caroli (Ryukyu mouse).